The sequence spans 255 residues: NADH dehydrogenase [ubiquinone] flavoprotein 2, mitochondrial (255 aa).

Residues 1–35 (MLARLAAKRLLEIRQVFRQPTSQVTRSLSTALNYH) constitute a mitochondrion transit peptide. [2Fe-2S] cluster contacts are provided by Cys-130, Cys-135, Cys-171, and Cys-175. The tract at residues 214 to 255 (RKGEKPPHGTQNPKRIKCGPEGGNKTLLGEPKPPQFRDLDAC) is disordered.

Belongs to the complex I 24 kDa subunit family. As to quaternary structure, complex I is composed of at least 49 different subunits. This is a component of the flavoprotein-sulfur (FP) fragment of the enzyme. Requires [2Fe-2S] cluster as cofactor.

The protein resides in the mitochondrion inner membrane. It carries out the reaction a ubiquinone + NADH + 5 H(+)(in) = a ubiquinol + NAD(+) + 4 H(+)(out). Its function is as follows. Core subunit of the mitochondrial membrane respiratory chain NADH dehydrogenase (Complex I) that is believed to belong to the minimal assembly required for catalysis. Complex I functions in the transfer of electrons from NADH to the respiratory chain. The immediate electron acceptor for the enzyme is believed to be ubiquinone. In Arabidopsis thaliana (Mouse-ear cress), this protein is NADH dehydrogenase [ubiquinone] flavoprotein 2, mitochondrial.